The sequence spans 357 residues: Ribosomal RNA small subunit methyltransferase C (357 aa).

This sequence belongs to the methyltransferase superfamily. RsmC family. Monomer.

Its subcellular location is the cytoplasm. It catalyses the reaction guanosine(1207) in 16S rRNA + S-adenosyl-L-methionine = N(2)-methylguanosine(1207) in 16S rRNA + S-adenosyl-L-homocysteine + H(+). Functionally, specifically methylates the guanine in position 1207 of 16S rRNA in the 30S particle. The sequence is that of Ribosomal RNA small subunit methyltransferase C from Colwellia psychrerythraea (strain 34H / ATCC BAA-681) (Vibrio psychroerythus).